The sequence spans 780 residues: Subtilisin-like protease SBT5.1 (780 aa).

A signal peptide spans 1 to 25 (MMRCLTITIMFFMFFFLSVIQKCKS). Residues 26 to 106 (ETSKSGDYII…VFPDQMLQLH (81 aa)) constitute a propeptide, activation peptide. The Inhibitor I9 domain maps to 33–106 (YIIYMGAASS…VFPDQMLQLH (74 aa)). The Peptidase S8 domain maps to 110-617 (SWDFLVQESY…AGQVTIFGPS (508 aa)). Catalysis depends on Asp147, which acts as the Charge relay system. The N-linked (GlcNAc...) asparagine glycan is linked to Asn197. His215 serves as the catalytic Charge relay system. N-linked (GlcNAc...) asparagine glycosylation is present at Asn230. The PA domain maps to 385 to 469 (IDANEEAARN…PEDGIQIMSY (85 aa)). Asn471 carries N-linked (GlcNAc...) asparagine glycosylation. Ser550 serves as the catalytic Charge relay system. Asn776 carries an N-linked (GlcNAc...) asparagine glycan.

This sequence belongs to the peptidase S8 family.

Its subcellular location is the secreted. The polypeptide is Subtilisin-like protease SBT5.1 (Arabidopsis thaliana (Mouse-ear cress)).